Reading from the N-terminus, the 482-residue chain is Glutamate synthase [NADPH] small chain (482 aa).

The 34-residue stretch at Glu39 to Leu72 folds into the 4Fe-4S ferredoxin-type domain. Residues Cys95, Cys99, Cys105, and Cys109 each coordinate [4Fe-4S] cluster.

As to quaternary structure, aggregate of 4 catalytic active heterodimers, consisting of a large and a small subunit. It depends on [4Fe-4S] cluster as a cofactor.

The catalysed reaction is 2 L-glutamate + NADP(+) = L-glutamine + 2-oxoglutarate + NADPH + H(+). Its pathway is amino-acid biosynthesis; L-glutamate biosynthesis via GLT pathway; L-glutamate from 2-oxoglutarate and L-glutamine (NADP(+) route): step 1/1. The protein operates within energy metabolism; nitrogen metabolism. The sequence is that of Glutamate synthase [NADPH] small chain (gltD) from Azospirillum brasilense.